A 63-amino-acid polypeptide reads, in one-letter code: Large ribosomal subunit protein bL35 (63 aa).

Residues 1–15 are compositionally biased toward basic residues; the sequence is MPKIKTHRGAAKRFK. The tract at residues 1–26 is disordered; the sequence is MPKIKTHRGAAKRFKQTAGGKWKGSH.

The protein belongs to the bacterial ribosomal protein bL35 family.

The sequence is that of Large ribosomal subunit protein bL35 from Pelotomaculum thermopropionicum (strain DSM 13744 / JCM 10971 / SI).